Reading from the N-terminus, the 100-residue chain is Small ribosomal subunit protein uS14c (100 aa).

Belongs to the universal ribosomal protein uS14 family. Part of the 30S ribosomal subunit.

It localises to the plastid. The protein localises to the chloroplast. Its function is as follows. Binds 16S rRNA, required for the assembly of 30S particles. The polypeptide is Small ribosomal subunit protein uS14c (Citrus sinensis (Sweet orange)).